A 1188-amino-acid chain; its full sequence is AT-rich interactive domain-containing protein 5B (1188 aa).

K130 participates in a covalent cross-link: Glycyl lysine isopeptide (Lys-Gly) (interchain with G-Cter in SUMO2). Residues 251–278 (RPRKKKTCPQRRDSFSGSKDPNNNCDGK) form a disordered region. Position 264 is a phosphoserine (S264). A compositionally biased stretch (polar residues) spans 265 to 275 (FSGSKDPNNNC). Residues 319-411 (RADEQAFLVA…LILPYERFIK (93 aa)) form the ARID domain. K337 carries the N6,N6-dimethyllysine modification. The disordered stretch occupies residues 413–614 (EEDKPLPPIK…LTSQNEAEEE (202 aa)). Basic and acidic residues-rich tracts occupy residues 445 to 459 (IKQE…KENT), 470 to 484 (SEQR…HKSA), 493 to 504 (VKGKPEGHKDLG), and 526 to 535 (SEKEAEEMGD). A Glycyl lysine isopeptide (Lys-Gly) (interchain with G-Cter in SUMO2) cross-link involves residue K446. Residues K494 and K496 each participate in a glycyl lysine isopeptide (Lys-Gly) (interchain with G-Cter in SUMO2) cross-link. Residues 594–609 (PFSSFSATKPPLTSQN) show a composition bias toward polar residues. Residues K767, K774, K803, K810, K893, K916, K920, and K935 each participate in a glycyl lysine isopeptide (Lys-Gly) (interchain with G-Cter in SUMO2) cross-link. Residues 958–978 (SPMTMSGPKKYPESLARSGKP) form a disordered region. Glycyl lysine isopeptide (Lys-Gly) (interchain with G-Cter in SUMO2) cross-links involve residues K988, K1000, and K1013. Residues 1030-1066 (AVSPLDPAKEASGKEKASEQESEGNKGAYGGHSGAAS) are disordered. Residue S1032 is modified to Phosphoserine. Residues 1036–1048 (PAKEASGKEKASE) are compositionally biased toward basic and acidic residues. Glycyl lysine isopeptide (Lys-Gly) (interchain with G-Cter in SUMO2) cross-links involve residues K1055 and K1070. Position 1133 is a phosphoserine (S1133).

This sequence belongs to the ARID5B family. Post-translationally, methylation at Lys-337 prevents DNA-binding. Demethylation by PHF2 promotes recruitment of the PHF2-ARID5B complex to promoters. In terms of tissue distribution, widely expressed. Expressed in lung, heart, small intestine, kidney, muscle and brain. Also expressed in spleen, thymus, endocrine organs and in uterus and testis.

The protein resides in the nucleus. Functionally, transcription coactivator that binds to the 5'-AATA[CT]-3' core sequence and plays a key role in adipogenesis and liver development. Acts by forming a complex with phosphorylated PHF2, which mediates demethylation at Lys-337, leading to target the PHF2-ARID5B complex to target promoters, where PHF2 mediates demethylation of dimethylated 'Lys-9' of histone H3 (H3K9me2), followed by transcription activation of target genes. The PHF2-ARID5B complex acts as a coactivator of HNF4A in liver. Required for adipogenesis: regulates triglyceride metabolism in adipocytes by regulating expression of adipogenic genes. Overexpression leads to induction of smooth muscle marker genes, suggesting that it may also act as a regulator of smooth muscle cell differentiation and proliferation. The sequence is that of AT-rich interactive domain-containing protein 5B (Arid5b) from Mus musculus (Mouse).